Reading from the N-terminus, the 427-residue chain is Tryptophan synthase beta chain 1 (427 aa).

At K107 the chain carries N6-(pyridoxal phosphate)lysine.

The protein belongs to the TrpB family. As to quaternary structure, tetramer of two alpha and two beta chains. The cofactor is pyridoxal 5'-phosphate.

The catalysed reaction is (1S,2R)-1-C-(indol-3-yl)glycerol 3-phosphate + L-serine = D-glyceraldehyde 3-phosphate + L-tryptophan + H2O. It participates in amino-acid biosynthesis; L-tryptophan biosynthesis; L-tryptophan from chorismate: step 5/5. Its function is as follows. The beta subunit is responsible for the synthesis of L-tryptophan from indole and L-serine. The polypeptide is Tryptophan synthase beta chain 1 (trpB1) (Aeropyrum pernix (strain ATCC 700893 / DSM 11879 / JCM 9820 / NBRC 100138 / K1)).